Here is a 199-residue protein sequence, read N- to C-terminus: Interleukin-11 (199 aa).

Positions 1–21 are cleaved as a signal peptide; that stretch reads MNCVCRLVLVVLSLWPDTAVA. The interval 182–190 is important for interaction with IL11RA and for the stimulation of cell proliferation; sequence HLTLDWAVR.

Belongs to the IL-6 superfamily. In terms of assembly, interacts with IL11RA to associate with IL6ST, giving rise to a multimeric signaling complex.

It is found in the secreted. In terms of biological role, cytokine that stimulates the proliferation of hematopoietic stem cells and megakaryocyte progenitor cells and induces megakaryocyte maturation resulting in increased platelet production. Also promotes the proliferation of hepatocytes in response to liver damage. Binding to its receptor formed by IL6ST and IL11RA activates a signaling cascade that promotes cell proliferation. Signaling leads to the activation of intracellular protein kinases and the phosphorylation of STAT3. The interaction with the membrane-bound IL11RA and IL6ST stimulates 'classic signaling', whereas the binding of IL11 and soluble IL11RA to IL6ST stimulates 'trans-signaling'. This is Interleukin-11 (IL11) from Macaca fascicularis (Crab-eating macaque).